The primary structure comprises 412 residues: MPSPRVLGLVLAGGAGRRLAPLTADRAKPAVPFGGLYRLIDFVLSNLVNAGYLRIAVLTQYKSHSLDRHITTTWRMSNLLGNYVTPVPAQQRLGPRWFAGSADAIHQSLNLVYDDAPDIVVVFGADHVYRMDPRQMVAQHLDSGAGVTVAGLRVPRSEGRAFGVIQTAPDGRTIEAFLEKPADPPGLPGSPEETFASMGNYVFSTDVLIDALRKDAADEDSVHDMGGNIIPMLVAQRAAAVYDFAGNVVPGTTVRDRGYWRDVGTVDSYFEAQMDLCALDPVFNLYNREWPILTSIPSLPPAKFVHDGLQRTGTAVNSIVSNGVIISGGTVRSSVLSPGVRVSSWAEVDHTVLMDNVLVGRGAVVRDAILDKNVHVPAGAQVGVDKDRDRARGYTVSEQGITVVGKGVTIAD.

Alpha-D-glucose 1-phosphate contacts are provided by residues G163, 179 to 180 (EK), and S197.

It belongs to the bacterial/plant glucose-1-phosphate adenylyltransferase family. As to quaternary structure, homotetramer.

The catalysed reaction is alpha-D-glucose 1-phosphate + ATP + H(+) = ADP-alpha-D-glucose + diphosphate. Its pathway is glycan biosynthesis; glycogen biosynthesis. Its function is as follows. Involved in the biosynthesis of ADP-glucose, a building block required for the elongation reactions to produce glycogen. Catalyzes the reaction between ATP and alpha-D-glucose 1-phosphate (G1P) to produce pyrophosphate and ADP-Glc. The protein is Glucose-1-phosphate adenylyltransferase of Frankia casuarinae (strain DSM 45818 / CECT 9043 / HFP020203 / CcI3).